The following is a 615-amino-acid chain: Delta(14)-sterol reductase LBR (615 aa).

A Tudor domain is found at 1 to 62 (MPSRKFADGE…DIKPLTSFRQ (62 aa)). Residues 1–211 (MPSRKFADGE…IRAKDLEFGG (211 aa)) lie on the Nuclear side of the membrane. Residues 53–109 (DIKPLTSFRQRKGGSTSSSPSRRRGSRSRSRSRSPGRPPKSARRSASASHQADIKEA) form a disordered region. Lys55 is modified (N6-acetyllysine). Phosphothreonine is present on Thr58. A phosphoserine mark is found at Ser59 and Ser67. A phosphoserine; by CDK1 mark is found at Ser71 and Ser86. Positions 73-86 (SRRRGSRSRSRSRS) are enriched in basic residues. Phosphoserine is present on residues Ser97 and Ser99. Thr118 bears the Phosphothreonine mark. Ser128 carries the phosphoserine modification. Position 200 is a phosphothreonine (Thr200). 8 consecutive transmembrane segments (helical) span residues 212–232 (VPGV…LLLM), 258–278 (VFGV…LPIG), 299–319 (FYAF…GVEF), 326–346 (FLQF…YLYM), 415–435 (VPSL…VDAL), 447–467 (IIHD…VPFI), 481–501 (EVSW…YVIF), and 561–581 (ACGF…MLLV). 2 positions are modified to N6-acetyllysine: Lys594 and Lys601.

It belongs to the ERG4/ERG24 family. In terms of assembly, interacts with CBX5. Interacts with DNA. Interaction with DNA is sequence independent with higher affinity for supercoiled and relaxed circular DNA than linear DNA. Interacts with lamin B. Interacts with CLNK. Interacts with TMEM147; promoting LBR localization to the nucleus inner membrane. Post-translationally, phosphorylated by CDK1 in mitosis when the inner nuclear membrane breaks down into vesicles that dissociate from the lamina and the chromatin. It is phosphorylated by different protein kinases in interphase when the membrane is associated with these structures. Phosphorylation of LBR and HP1 proteins may be responsible for some of the alterations in chromatin organization and nuclear structure which occur at various times during the cell cycle. Phosphorylated by SRPK1. In late anaphase LBR is dephosphorylated, probably by PP1 and/or PP2A, allowing reassociation with chromatin.

The protein localises to the nucleus inner membrane. Its subcellular location is the nucleus. The protein resides in the cytoplasm. It is found in the endoplasmic reticulum membrane. It catalyses the reaction 5alpha-cholest-8,14-dien-3beta-ol + NADPH + H(+) = 5alpha-cholest-8-en-3beta-ol + NADP(+). The catalysed reaction is 4,4-dimethyl-5alpha-cholesta-8,24-dien-3beta-ol + NADP(+) = 4,4-dimethyl-5alpha-cholesta-8,14,24-trien-3beta-ol + NADPH + H(+). The enzyme catalyses 4,4-dimethyl-8,14-cholestadien-3beta-ol + NADPH + H(+) = 4,4-dimethyl-5alpha-cholest-8-en-3beta-ol + NADP(+). It functions in the pathway steroid biosynthesis; cholesterol biosynthesis. Functionally, catalyzes the reduction of the C14-unsaturated bond of lanosterol, as part of the metabolic pathway leading to cholesterol biosynthesis. Plays a critical role in myeloid cell cholesterol biosynthesis which is essential to both myeloid cell growth and functional maturation. Mediates the activation of NADPH oxidases, perhaps by maintaining critical levels of cholesterol required for membrane lipid raft formation during neutrophil differentiation. Anchors the lamina and the heterochromatin to the inner nuclear membrane. This chain is Delta(14)-sterol reductase LBR (LBR), found in Pongo abelii (Sumatran orangutan).